Here is a 216-residue protein sequence, read N- to C-terminus: UDP-N-acetylglucosamine transferase subunit ALG14 (216 aa).

Topologically, residues 1–3 are lumenal; that stretch reads MVC. A helical membrane pass occupies residues 4–24; sequence VLTLAASAGGLAVLLIVRLWA. The Cytoplasmic portion of the chain corresponds to 25 to 216; it reads VLRSHPVTPR…PKSVYLGRIV (192 aa).

It belongs to the ALG14 family. Forms with ALG13 the active heterodimeric UDP-N-acetylglucosamine transferase complex.

It is found in the endoplasmic reticulum membrane. Part of the UDP-N-acetylglucosamine transferase complex that operates in the biosynthetic pathway of dolichol-linked oligosaccharides, the glycan precursors employed in protein asparagine (N)-glycosylation. The assembly of dolichol-linked oligosaccharides begins on the cytosolic side of the endoplasmic reticulum membrane and finishes in its lumen. The sequential addition of sugars to dolichol pyrophosphate produces dolichol-linked oligosaccharides containing fourteen sugars, including two GlcNAcs, nine mannoses and three glucoses. Once assembled, the oligosaccharides are transferred from the lipid to nascent proteins by oligosaccharyltransferases. Functions as a protein-membrane adapter recruiting ALG13 at the cytoplasmic face of the endoplasmic reticulum, where the complex catalyzes the second step of dolichol pyrophosphate biosynthesis, transferring a beta1,4-linked N-acetylglucosamine (GlcNAc) from UDP-GlcNAc to GlcNAc-pyrophosphatedolichol (Gn-PDol) to produce N,N'-diacetylchitobiosyl diphosphodolichol. N,N'-diacetylchitobiosyl diphosphodolichol is a substrate for ALG1, the following enzyme in the biosynthetic pathway. This chain is UDP-N-acetylglucosamine transferase subunit ALG14, found in Rattus norvegicus (Rat).